The following is a 537-amino-acid chain: Eukaryotic translation initiation factor 3 subunit L (537 aa).

The 213-residue stretch at T301 to H513 folds into the PCI domain.

Belongs to the eIF-3 subunit L family. In terms of assembly, component of the eukaryotic translation initiation factor 3 (eIF-3) complex.

It localises to the cytoplasm. Component of the eukaryotic translation initiation factor 3 (eIF-3) complex, which is involved in protein synthesis of a specialized repertoire of mRNAs and, together with other initiation factors, stimulates binding of mRNA and methionyl-tRNAi to the 40S ribosome. The eIF-3 complex specifically targets and initiates translation of a subset of mRNAs involved in cell proliferation. The protein is Eukaryotic translation initiation factor 3 subunit L of Aedes aegypti (Yellowfever mosquito).